A 283-amino-acid polypeptide reads, in one-letter code: BTB/POZ domain-containing protein KCTD15 (283 aa).

Positions 1–33 (MPHRKERPSGSSLNAHGSSGTAEGGNMSRLSLT) are disordered. Positions 9–21 (SGSSLNAHGSSGT) are enriched in polar residues. Phosphoserine is present on residues S31, S35, and S38. Residues 56 to 126 (APVHIDVGGH…LRTSKLLLPD (71 aa)) form the BTB domain.

In terms of assembly, forms oligomers, predominantly homopentamers. Interacts with KCTD1, probably forming heteropentamers depending on its abundance in a cell-type dependent manner. Interacts with TFAP2A; this interaction inhibits TFAP2A transcriptional activation. As to expression, expressed in the cerebral cortex, cerebellum, and hypothalamus (at protein level). Expressed in the arcuate hypothalamic nucleus, the ventromedial hypothalamic nucleus and the accumbens nucleus of the ventral striatum.

The protein localises to the nucleus. In terms of biological role, during embryonic development, interferes with neural crest formation. Inhibits AP2 transcriptional activity by interaction with its activation domain. The polypeptide is BTB/POZ domain-containing protein KCTD15 (Kctd15) (Mus musculus (Mouse)).